A 206-amino-acid polypeptide reads, in one-letter code: Histidine biosynthesis bifunctional protein HisIE (206 aa).

Residues 1 to 114 (MLKKINFIDI…FQVPSENLFF (114 aa)) form a phosphoribosyl-AMP cyclohydrolase region. The tract at residues 115–206 (LHDLDCMLKF…NLKMRSNKQV (92 aa)) is phosphoribosyl-ATP pyrophosphohydrolase.

This sequence in the N-terminal section; belongs to the PRA-CH family. The protein in the C-terminal section; belongs to the PRA-PH family.

It is found in the cytoplasm. The enzyme catalyses 1-(5-phospho-beta-D-ribosyl)-ATP + H2O = 1-(5-phospho-beta-D-ribosyl)-5'-AMP + diphosphate + H(+). It catalyses the reaction 1-(5-phospho-beta-D-ribosyl)-5'-AMP + H2O = 1-(5-phospho-beta-D-ribosyl)-5-[(5-phospho-beta-D-ribosylamino)methylideneamino]imidazole-4-carboxamide. It functions in the pathway amino-acid biosynthesis; L-histidine biosynthesis; L-histidine from 5-phospho-alpha-D-ribose 1-diphosphate: step 2/9. The protein operates within amino-acid biosynthesis; L-histidine biosynthesis; L-histidine from 5-phospho-alpha-D-ribose 1-diphosphate: step 3/9. This chain is Histidine biosynthesis bifunctional protein HisIE (hisI), found in Buchnera aphidicola subsp. Baizongia pistaciae (strain Bp).